The primary structure comprises 736 residues: Acyl-coenzyme A oxidase (736 aa).

The protein belongs to the acyl-CoA oxidase family. FAD serves as cofactor.

It is found in the peroxisome. It carries out the reaction a 2,3-saturated acyl-CoA + O2 = a (2E)-enoyl-CoA + H2O2. Its pathway is lipid metabolism; peroxisomal fatty acid beta-oxidation. The polypeptide is Acyl-coenzyme A oxidase (POX1) (Kluyveromyces lactis (strain ATCC 8585 / CBS 2359 / DSM 70799 / NBRC 1267 / NRRL Y-1140 / WM37) (Yeast)).